The primary structure comprises 253 residues: Imidazole glycerol phosphate synthase subunit HisF (253 aa).

Catalysis depends on residues Asp-13 and Asp-132.

The protein belongs to the HisA/HisF family. In terms of assembly, heterodimer of HisH and HisF.

The protein localises to the cytoplasm. The catalysed reaction is 5-[(5-phospho-1-deoxy-D-ribulos-1-ylimino)methylamino]-1-(5-phospho-beta-D-ribosyl)imidazole-4-carboxamide + L-glutamine = D-erythro-1-(imidazol-4-yl)glycerol 3-phosphate + 5-amino-1-(5-phospho-beta-D-ribosyl)imidazole-4-carboxamide + L-glutamate + H(+). The protein operates within amino-acid biosynthesis; L-histidine biosynthesis; L-histidine from 5-phospho-alpha-D-ribose 1-diphosphate: step 5/9. In terms of biological role, IGPS catalyzes the conversion of PRFAR and glutamine to IGP, AICAR and glutamate. The HisF subunit catalyzes the cyclization activity that produces IGP and AICAR from PRFAR using the ammonia provided by the HisH subunit. This is Imidazole glycerol phosphate synthase subunit HisF from Aliarcobacter butzleri (strain RM4018) (Arcobacter butzleri).